The sequence spans 364 residues: Esculetin O-methyltransferase (364 aa).

Asn132 provides a ligand contact to bergaptol. S-adenosyl-L-homocysteine is bound by residues Gly209, Asp232, Asp252, Met253, Met265, and Lys266. His270 contributes to the bergaptol binding site. The active-site Proton acceptor is His270.

Belongs to the class I-like SAM-binding methyltransferase superfamily. Cation-independent O-methyltransferase family. COMT subfamily. In terms of assembly, homodimer. As to expression, expressed ubiquitously.

The catalysed reaction is bergaptol + S-adenosyl-L-methionine = bergapten + S-adenosyl-L-homocysteine. It carries out the reaction xanthotoxol + S-adenosyl-L-methionine = xanthotoxin + S-adenosyl-L-homocysteine + H(+). The enzyme catalyses esculetin + S-adenosyl-L-methionine = isoscopoletin + S-adenosyl-L-homocysteine + H(+). It catalyses the reaction esculetin + S-adenosyl-L-methionine = scopoletin + S-adenosyl-L-homocysteine + H(+). Its pathway is aromatic compound metabolism. The protein operates within secondary metabolite biosynthesis. Inhibited by zinc Zn(2+), copper Cu(2+) and silver Ag(+) ions. O-methyltransferase involved in the biosynthesis of methoxylated coumarins natural products such as isoscopoletin, scopoletin, xanthotoxin and bergapten, photosensitizers used for medical purpose such as treating psoriasis and vitiligo or facilitating resistance to microbial infection and other stresses. Catalyzes the methylation of esculetin, bergaptol and xanthotoxol, but seems inactive on scopoletin and isoscopoletin. The protein is Esculetin O-methyltransferase of Kitagawia praeruptora (Peucedanum praeruptorum).